Here is a 119-residue protein sequence, read N- to C-terminus: Beta-2-microglobulin (119 aa).

Positions 1–20 (MVCSVVVALLALLSLSGLEA) are cleaved as a signal peptide. In terms of domain architecture, Ig-like C1-type spans 25 to 114 (PKIQVYSRHP…VTFSTPKTVK (90 aa)). A disulfide bond links C45 and C100.

The protein belongs to the beta-2-microglobulin family. In terms of assembly, heterodimer of an alpha chain and a beta chain. Beta-2-microglobulin is the beta-chain of major histocompatibility complex class I molecules.

It localises to the secreted. Functionally, component of the class I major histocompatibility complex (MHC). Involved in the presentation of peptide antigens to the immune system. This Cebuella pygmaea (Pygmy marmoset) protein is Beta-2-microglobulin (B2M).